Reading from the N-terminus, the 1155-residue chain is Alpha,alpha-trehalose-phosphate synthase [UDP-forming] 1 (1155 aa).

A disordered region spans residues 56–94; that stretch reads LQRRRSVSSRGGSLRGSMDSLNDSGQNGAEDVIGVEDEE. A compositionally biased stretch (low complexity) spans 63–72; sequence SSRGGSLRGS.

In the N-terminal section; belongs to the glycosyltransferase 20 family. It in the C-terminal section; belongs to the gob-1 trehalose phosphatase family.

It catalyses the reaction D-glucose 6-phosphate + UDP-alpha-D-glucose = alpha,alpha-trehalose 6-phosphate + UDP + H(+). Its function is as follows. Catalyzes the production of trehalose from glucose-6-phosphate and UDP-alpha-D-glucose in a 2 step process. This chain is Alpha,alpha-trehalose-phosphate synthase [UDP-forming] 1 (tps-1), found in Aphelenchoides avenae (Mycophagous nematode worm).